A 180-amino-acid polypeptide reads, in one-letter code: Urease accessory protein UreE (180 aa).

Residues 71–90 (AAPSGAGHGDGEQDGTGAPG) are disordered.

Belongs to the UreE family.

It is found in the cytoplasm. Involved in urease metallocenter assembly. Binds nickel. Probably functions as a nickel donor during metallocenter assembly. The chain is Urease accessory protein UreE from Kocuria rhizophila (strain ATCC 9341 / DSM 348 / NBRC 103217 / DC2201).